Consider the following 191-residue polypeptide: Cell division protein SepF (191 aa).

The span at 151 to 165 (SSSPEEASPSSVPTE) shows a compositional bias: low complexity. The tract at residues 151–191 (SSSPEEASPSSVPTENTPQYSLGKNTTPEPAWGNSKLSAYS) is disordered. Residues 166-178 (NTPQYSLGKNTTP) are compositionally biased toward polar residues.

The protein belongs to the SepF family. As to quaternary structure, homodimer. Interacts with FtsZ.

It localises to the cytoplasm. Its function is as follows. Cell division protein that is part of the divisome complex and is recruited early to the Z-ring. Probably stimulates Z-ring formation, perhaps through the cross-linking of FtsZ protofilaments. Its function overlaps with FtsA. In Prochlorococcus marinus (strain MIT 9215), this protein is Cell division protein SepF.